The primary structure comprises 323 residues: Peroxisomal and mitochondrial division factor 2 (323 aa).

Disordered regions lie at residues 1–55 (MAEE…NDAI), 73–92 (ESKA…KSDE), and 120–143 (TART…SQKG). Topologically, residues 1-297 (MAEERSLNGE…WSPNVTAVGS (297 aa)) are cytoplasmic. Acidic residues predominate over residues 13 to 26 (GQDDESFFDSDQQG). Residues 28–278 (DGKSTELNQK…INGLKNVVEE (251 aa)) are a coiled coil. Residues 298–318 (GGAVAAVAVAVAGAAVVCYIY) form a helical membrane-spanning segment. The Mitochondrial intermembrane portion of the chain corresponds to 319–323 (HSRRV).

In terms of assembly, homodimer. Interacts with PMD1.

The protein localises to the mitochondrion outer membrane. Involved in morphogenesis and proliferation of mitochondria. Does not act redundantly with PMD1. Is not involved in peroxisomal proliferation. The sequence is that of Peroxisomal and mitochondrial division factor 2 from Arabidopsis thaliana (Mouse-ear cress).